The following is a 395-amino-acid chain: Putative pyridoxal phosphate-dependent acyltransferase (395 aa).

A pyridoxal 5'-phosphate-binding site is contributed by 110-111; that stretch reads GF. Residue histidine 135 coordinates substrate. Residues serine 185, 210–213, and 240–243 contribute to the pyridoxal 5'-phosphate site; these read DDAH and TLSK. The residue at position 243 (lysine 243) is an N6-(pyridoxal phosphate)lysine. Threonine 357 contributes to the substrate binding site.

It belongs to the class-II pyridoxal-phosphate-dependent aminotransferase family. In terms of assembly, homodimer. Pyridoxal 5'-phosphate is required as a cofactor.

The chain is Putative pyridoxal phosphate-dependent acyltransferase from Staphylococcus aureus (strain MRSA252).